Here is a 272-residue protein sequence, read N- to C-terminus: 2-succinyl-6-hydroxy-2,4-cyclohexadiene-1-carboxylate synthase (272 aa).

This sequence belongs to the AB hydrolase superfamily. MenH family. Monomer.

The enzyme catalyses 5-enolpyruvoyl-6-hydroxy-2-succinyl-cyclohex-3-ene-1-carboxylate = (1R,6R)-6-hydroxy-2-succinyl-cyclohexa-2,4-diene-1-carboxylate + pyruvate. Its pathway is quinol/quinone metabolism; 1,4-dihydroxy-2-naphthoate biosynthesis; 1,4-dihydroxy-2-naphthoate from chorismate: step 3/7. It functions in the pathway quinol/quinone metabolism; menaquinone biosynthesis. Functionally, catalyzes a proton abstraction reaction that results in 2,5-elimination of pyruvate from 2-succinyl-5-enolpyruvyl-6-hydroxy-3-cyclohexene-1-carboxylate (SEPHCHC) and the formation of 2-succinyl-6-hydroxy-2,4-cyclohexadiene-1-carboxylate (SHCHC). In Yersinia pseudotuberculosis serotype O:1b (strain IP 31758), this protein is 2-succinyl-6-hydroxy-2,4-cyclohexadiene-1-carboxylate synthase.